Here is a 752-residue protein sequence, read N- to C-terminus: GTPase-activating protein rrc-1 (752 aa).

In terms of domain architecture, SH3 spans 165–244; that stretch reads PAIAAAVVTK…PRDCVMLIDD (80 aa). Residues 281–463 enclose the Rho-GAP domain; the sequence is LELTELFMRT…FCIENSDSLF (183 aa). Disordered stretches follow at residues 523–552 and 582–609; these read STGELCGSPPSEVKWRSRSTRSHSTDATFQ and RSMRPTSRPPPSPRTRRARFSNGGGANN.

Functions as a GTPase-activating protein (GAP) for ced-10/RAC-1 and CDC42. The sequence is that of GTPase-activating protein rrc-1 from Caenorhabditis briggsae.